The chain runs to 1090 residues: Leucine--tRNA ligase, cytoplasmic (1090 aa).

An N-acetylserine modification is found at S2. The short motif at 66–76 (PYMNGVMHAGH) is the 'HIGH' region element. T142 carries the post-translational modification Phosphothreonine. A 'KMSKS' region motif is present at residues 729 to 733 (KMSKS). K732 serves as a coordination point for ATP.

This sequence belongs to the class-I aminoacyl-tRNA synthetase family.

The protein resides in the cytoplasm. It carries out the reaction tRNA(Leu) + L-leucine + ATP = L-leucyl-tRNA(Leu) + AMP + diphosphate. This Saccharomyces cerevisiae (strain ATCC 204508 / S288c) (Baker's yeast) protein is Leucine--tRNA ligase, cytoplasmic (CDC60).